Consider the following 1613-residue polypeptide: Myosin-IIIa (1613 aa).

Residues 21-287 form the Protein kinase domain; the sequence is WEIIETIGKG…VSDLLKHKFI (267 aa). ATP is bound by residues 27 to 35 and K50; that span reads IGKGTYGKV. D150 acts as the Proton acceptor in catalysis. One can recognise a Myosin motor domain in the interval 338-1052; that stretch reads KDVDDLATLD…HVEQLNLMRK (715 aa). The tract at residues 933-955 is actin-binding; the sequence is LMDLLSKMVVGQPHFVRCIKPNN. IQ domains are found at residues 1054–1083 and 1081–1110; these read ATNK…KRKS and RKSS…MKNT. 2 disordered regions span residues 1136 to 1168 and 1476 to 1506; these read VKKQ…TAPF and SGVS…EDST. Residues 1145 to 1161 are compositionally biased toward low complexity; sequence PTNESNTSTPNNKESPS. The interaction with MORN4 stretch occupies residues 1398–1476; it reads EGVHHSKMVD…RHVSTHQYLS (79 aa). The span at 1488–1497 shows a compositional bias: basic residues; it reads RPPRRPRKPK.

This sequence in the C-terminal section; belongs to the TRAFAC class myosin-kinesin ATPase superfamily. Myosin family. In the N-terminal section; belongs to the protein kinase superfamily. STE Ser/Thr protein kinase family. Interacts with MORN4. Interacts (via C-terminus) with ESPN and ESPNL. In terms of tissue distribution, expressed in the cochlear hair cells (at protein level). Expressed in utricle hair bundles (at protein level).

Its subcellular location is the cytoplasm. The protein localises to the cytoskeleton. The protein resides in the cell projection. It is found in the filopodium tip. It localises to the stereocilium. It carries out the reaction L-seryl-[protein] + ATP = O-phospho-L-seryl-[protein] + ADP + H(+). The enzyme catalyses L-threonyl-[protein] + ATP = O-phospho-L-threonyl-[protein] + ADP + H(+). The catalysed reaction is ATP + H2O = ADP + phosphate + H(+). Actin-dependent motor protein with a protein kinase activity, playing an essential role in hearing. Probably plays also a role in vision. Required for normal cochlear hair bundle development and hearing. Plays an important role in the early steps of cochlear hair bundle morphogenesis. Influences the number and lengths of stereocilia to be produced and limits the growth of microvilli within the forming auditory hair bundles thereby contributing to the architecture of the hair bundle, including its staircase pattern. Involved in the elongation of actin in stereocilia tips by transporting the actin regulatory factor ESPN to the plus ends of actin filaments. The sequence is that of Myosin-IIIa (Myo3a) from Mus musculus (Mouse).